Consider the following 196-residue polypeptide: Autophagy-related protein 31 (196 aa).

The interval 20 to 45 is disordered; it reads IKNNKGPSNDDQPAYNNESKSTDGSD. The segment covering 22–43 has biased composition (polar residues); it reads NNKGPSNDDQPAYNNESKSTDG. A phosphoserine mark is found at Ser-38 and Ser-40. Thr-41 is modified (phosphothreonine). 2 positions are modified to phosphoserine: Ser-44 and Ser-116. Residues 120–129 are compositionally biased toward polar residues; it reads EENQMRTLSS. The segment at 120–145 is disordered; the sequence is EENQMRTLSSHGDDKSNDEEEELSVD. 6 positions are modified to phosphoserine: Ser-135, Ser-143, Ser-146, Ser-153, Ser-174, and Ser-195. Residues 135–144 are compositionally biased toward acidic residues; sequence SNDEEEELSV.

Forms a stable complex with ATG17 and ATG29. Interacts directly with ATG29. The ATG17-ATG29-ATG31 complex interacts with the ATG1-ATG13 complex. Note=The interaction with the ATG1-ATG13 complex is induced by starvation. Post-translationally, highly phosphorylated. Ser-174 is phosphorylated constitutively. Phosphorylation at Ser-174 is required for autophagy induced by various autophagy stimuli such as nitrogen starvation and rapamycin treatment.

It localises to the cytoplasm. The protein localises to the cytoskeleton. The protein resides in the preautophagosomal structure. Functionally, plays a role in starvation-induced autophagy. Involved in mitophagy. Functions with ATG17 and ATG29 at the preautophagosomal structure (PAS) in order to form normal autophagosomes under starvation conditions. May be involved in microtubule function, such as chromosome segregation and karyogamy. The chain is Autophagy-related protein 31 (ATG31) from Saccharomyces cerevisiae (strain ATCC 204508 / S288c) (Baker's yeast).